Here is a 211-residue protein sequence, read N- to C-terminus: Large ribosomal subunit protein uL3 (211 aa).

The residue at position 151 (Gln-151) is an N5-methylglutamine.

This sequence belongs to the universal ribosomal protein uL3 family. Part of the 50S ribosomal subunit. Forms a cluster with proteins L14 and L19. Methylated by PrmB.

Its function is as follows. One of the primary rRNA binding proteins, it binds directly near the 3'-end of the 23S rRNA, where it nucleates assembly of the 50S subunit. The polypeptide is Large ribosomal subunit protein uL3 (Francisella tularensis subsp. tularensis (strain FSC 198)).